Consider the following 62-residue polypeptide: Sperm protamine P1 (62 aa).

The tract at residues 1 to 62 (MARYRRHSRS…RRYSRRGRRR (62 aa)) is disordered.

This sequence belongs to the protamine P1 family. In terms of tissue distribution, testis.

Its subcellular location is the nucleus. It localises to the chromosome. Functionally, protamines substitute for histones in the chromatin of sperm during the haploid phase of spermatogenesis. They compact sperm DNA into a highly condensed, stable and inactive complex. The sequence is that of Sperm protamine P1 (PRM1) from Pseudantechinus bilarni (Sandstone dibbler).